Consider the following 145-residue polypeptide: Nicking endonuclease (145 aa).

Residues 126–145 (NPQEKTQVKTETKSGFARFL) form a disordered region.

Endonuclease responsible for the single-chain interruptions (nicks) located at specific positions in the minus strand of the viral genome. The sequence is that of Nicking endonuclease from Escherichia phage T5 (Enterobacteria phage T5).